A 182-amino-acid chain; its full sequence is NADH-quinone oxidoreductase subunit I (182 aa).

2 4Fe-4S ferredoxin-type domains span residues 52 to 82 and 92 to 121; these read LTRDPDGEERCVACNLCAVACPVGCISLQKA and EFFRINFSRCIFCGLCEEACPTTAIQLTPD. [4Fe-4S] cluster is bound by residues cysteine 62, cysteine 65, cysteine 68, cysteine 72, cysteine 101, cysteine 104, cysteine 107, and cysteine 111.

This sequence belongs to the complex I 23 kDa subunit family. As to quaternary structure, NDH-1 is composed of 13 different subunits. Subunits NuoA, H, J, K, L, M, N constitute the membrane sector of the complex. The cofactor is [4Fe-4S] cluster.

The protein resides in the cell inner membrane. It carries out the reaction a quinone + NADH + 5 H(+)(in) = a quinol + NAD(+) + 4 H(+)(out). In terms of biological role, NDH-1 shuttles electrons from NADH, via FMN and iron-sulfur (Fe-S) centers, to quinones in the respiratory chain. The immediate electron acceptor for the enzyme in this species is believed to be ubiquinone. Couples the redox reaction to proton translocation (for every two electrons transferred, four hydrogen ions are translocated across the cytoplasmic membrane), and thus conserves the redox energy in a proton gradient. The sequence is that of NADH-quinone oxidoreductase subunit I from Pseudomonas entomophila (strain L48).